Here is a 906-residue protein sequence, read N- to C-terminus: Catenin alpha-2 (906 aa).

Over residues 866–880 the composition is skewed to basic and acidic residues; it reads KKPLVKREKPEEYQT. A disordered region spans residues 866-892; the sequence is KKPLVKREKPEEYQTRVRRGSQKKHIS. Residues 881 to 891 are compositionally biased toward basic residues; the sequence is RVRRGSQKKHI.

The protein belongs to the vinculin/alpha-catenin family. Interacts with CDH1 and CDH2. Mainly in the nervous system (at protein level).

It localises to the cell membrane. Its subcellular location is the cytoplasm. It is found in the cytoskeleton. The protein resides in the cell junction. The protein localises to the adherens junction. It localises to the cell projection. Its subcellular location is the axon. It is found in the nucleus. Functionally, may function as a linker between cadherin adhesion receptors and the cytoskeleton to regulate cell-cell adhesion and differentiation in the nervous system. The polypeptide is Catenin alpha-2 (CTNNA2) (Gallus gallus (Chicken)).